We begin with the raw amino-acid sequence, 373 residues long: Homoserine O-acetyltransferase (373 aa).

Residues 52 to 356 (NVVMVLHALT…VYGHDGFLVE (305 aa)) form the AB hydrolase-1 domain. The active-site Nucleophile is the S157. A substrate-binding site is contributed by R227. Catalysis depends on residues D320 and H350. Residue D351 coordinates substrate.

It belongs to the AB hydrolase superfamily. MetX family. As to quaternary structure, homodimer.

It is found in the cytoplasm. It carries out the reaction L-homoserine + acetyl-CoA = O-acetyl-L-homoserine + CoA. It participates in amino-acid biosynthesis; L-methionine biosynthesis via de novo pathway; O-acetyl-L-homoserine from L-homoserine: step 1/1. In terms of biological role, transfers an acetyl group from acetyl-CoA to L-homoserine, forming acetyl-L-homoserine. The polypeptide is Homoserine O-acetyltransferase (Mycobacterium sp. (strain KMS)).